Here is a 197-residue protein sequence, read N- to C-terminus: Potassium-transporting ATPase KdpC subunit (197 aa).

Residues 7–27 (PAFISLILFTLLFGLIYPLTV) form a helical membrane-spanning segment.

It belongs to the KdpC family. The system is composed of three essential subunits: KdpA, KdpB and KdpC.

It localises to the cell inner membrane. Part of the high-affinity ATP-driven potassium transport (or Kdp) system, which catalyzes the hydrolysis of ATP coupled with the electrogenic transport of potassium into the cytoplasm. This subunit acts as a catalytic chaperone that increases the ATP-binding affinity of the ATP-hydrolyzing subunit KdpB by the formation of a transient KdpB/KdpC/ATP ternary complex. This chain is Potassium-transporting ATPase KdpC subunit, found in Beijerinckia indica subsp. indica (strain ATCC 9039 / DSM 1715 / NCIMB 8712).